The sequence spans 475 residues: Ribulose bisphosphate carboxylase large chain (475 aa).

The propeptide occupies 1 to 2 (MA). Residue Pro3 is modified to N-acetylproline. Lys14 is subject to N6,N6,N6-trimethyllysine. 2 residues coordinate substrate: Asn123 and Thr173. Lys175 acts as the Proton acceptor in catalysis. Position 177 (Lys177) interacts with substrate. Mg(2+) contacts are provided by Lys201, Asp203, and Glu204. Residue Lys201 is modified to N6-carboxylysine. His294 functions as the Proton acceptor in the catalytic mechanism. Residues Arg295, His327, and Ser379 each coordinate substrate.

Belongs to the RuBisCO large chain family. Type I subfamily. Heterohexadecamer of 8 large chains and 8 small chains. Mg(2+) is required as a cofactor.

Its subcellular location is the plastid. It is found in the chloroplast. The catalysed reaction is 2 (2R)-3-phosphoglycerate + 2 H(+) = D-ribulose 1,5-bisphosphate + CO2 + H2O. It carries out the reaction D-ribulose 1,5-bisphosphate + O2 = 2-phosphoglycolate + (2R)-3-phosphoglycerate + 2 H(+). RuBisCO catalyzes two reactions: the carboxylation of D-ribulose 1,5-bisphosphate, the primary event in carbon dioxide fixation, as well as the oxidative fragmentation of the pentose substrate in the photorespiration process. Both reactions occur simultaneously and in competition at the same active site. The protein is Ribulose bisphosphate carboxylase large chain of Nephroselmis olivacea (Green alga).